Here is a 315-residue protein sequence, read N- to C-terminus: CRISPR-associated endonuclease Cas1 1 (315 aa).

Residues E144, H208, and E223 each contribute to the Mn(2+) site.

It belongs to the CRISPR-associated endonuclease Cas1 family. In terms of assembly, homodimer, forms a heterotetramer with a Cas2 homodimer. Mg(2+) is required as a cofactor. Mn(2+) serves as cofactor.

CRISPR (clustered regularly interspaced short palindromic repeat), is an adaptive immune system that provides protection against mobile genetic elements (viruses, transposable elements and conjugative plasmids). CRISPR clusters contain spacers, sequences complementary to antecedent mobile elements, and target invading nucleic acids. CRISPR clusters are transcribed and processed into CRISPR RNA (crRNA). Acts as a dsDNA endonuclease. Involved in the integration of spacer DNA into the CRISPR cassette. In Thermus thermophilus (strain ATCC 27634 / DSM 579 / HB8), this protein is CRISPR-associated endonuclease Cas1 1.